Reading from the N-terminus, the 156-residue chain is RNA pyrophosphohydrolase (156 aa).

The region spanning 6–148 (NYRPNVAAIV…KKNIYVKVIK (143 aa)) is the Nudix hydrolase domain. The Nudix box signature appears at 43-64 (GGIDKGESVKNALFRELKEEIG).

Belongs to the Nudix hydrolase family. RppH subfamily. It depends on a divalent metal cation as a cofactor.

Its function is as follows. Accelerates the degradation of transcripts by removing pyrophosphate from the 5'-end of triphosphorylated RNA, leading to a more labile monophosphorylated state that can stimulate subsequent ribonuclease cleavage. This Campylobacter jejuni subsp. jejuni serotype O:6 (strain 81116 / NCTC 11828) protein is RNA pyrophosphohydrolase.